The sequence spans 201 residues: B-cell CLL/lymphoma 7 protein family member B-B (201 aa).

Positions 104-201 (QSNTKVDSSS…VCTEHNSTVS (98 aa)) are disordered.

It belongs to the BCL7 family.

The protein is B-cell CLL/lymphoma 7 protein family member B-B of Danio rerio (Zebrafish).